Reading from the N-terminus, the 237-residue chain is Ribonuclease PH (237 aa).

Phosphate contacts are provided by residues Arg86 and 124–126; that span reads GTR.

This sequence belongs to the RNase PH family. As to quaternary structure, homohexameric ring arranged as a trimer of dimers.

It carries out the reaction tRNA(n+1) + phosphate = tRNA(n) + a ribonucleoside 5'-diphosphate. Its function is as follows. Phosphorolytic 3'-5' exoribonuclease that plays an important role in tRNA 3'-end maturation. Removes nucleotide residues following the 3'-CCA terminus of tRNAs; can also add nucleotides to the ends of RNA molecules by using nucleoside diphosphates as substrates, but this may not be physiologically important. Probably plays a role in initiation of 16S rRNA degradation (leading to ribosome degradation) during starvation. The polypeptide is Ribonuclease PH (Dinoroseobacter shibae (strain DSM 16493 / NCIMB 14021 / DFL 12)).